A 175-amino-acid polypeptide reads, in one-letter code: Di-N-acetylchitobiase (175 aa).

The first 38 residues, 1 to 38, serve as a signal peptide directing secretion; sequence MARLQLAGSRRLVPLPRRAPRLAPLLLPLLLALPDGAR. Positions 39–175 constitute a GH18 domain; the sequence is ADCPCKVPAL…SFHHEIKGSQ (137 aa). Asn-115 carries N-linked (GlcNAc...) asparagine glycosylation. The active-site Proton donor is Glu-143.

The protein belongs to the glycosyl hydrolase 18 family.

It is found in the lysosome. Its function is as follows. Involved in the degradation of asparagine-linked glycoproteins. Hydrolyze of N-acetyl-beta-D-glucosamine (1-4)N-acetylglucosamine chitobiose core from the reducing end of the bond, it requires prior cleavage by glycosylasparaginase. The polypeptide is Di-N-acetylchitobiase (CTBS) (Bos taurus (Bovine)).